A 408-amino-acid chain; its full sequence is Endo-1,4-beta-xylanase A (408 aa).

A signal peptide spans 1 to 19 (MKLSASFAALALLLPFVQA). The CBM1 domain occupies 20–55 (QSPVWGQCGGIGWTGPTTCTAGNVCQEYSAYYSQCI). Residues 64–89 (TSVSTAPNPPPTSHTSTSSAPSGAST) are disordered. Over residues 76 to 89 (SHTSTSSAPSGAST) the composition is skewed to low complexity. A GH10 domain is found at 88–405 (STSTAKLNTL…KPAYDGIAIG (318 aa)). Glu222 (proton donor) is an active-site residue. The active-site Nucleophile is Glu327. The cysteines at positions 355 and 361 are disulfide-linked.

This sequence belongs to the glycosyl hydrolase 10 (cellulase F) family.

It localises to the secreted. It carries out the reaction Endohydrolysis of (1-&gt;4)-beta-D-xylosidic linkages in xylans.. The protein operates within glycan degradation; xylan degradation. Functionally, endo-1,4-beta-xylanase involved in the hydrolysis of xylan, a major structural heterogeneous polysaccharide found in plant biomass representing the second most abundant polysaccharide in the biosphere, after cellulose. This is Endo-1,4-beta-xylanase A (xynA) from Phanerodontia chrysosporium (White-rot fungus).